Here is a 1056-residue protein sequence, read N- to C-terminus: Carbamoyl phosphate synthase large chain (1056 aa).

A carboxyphosphate synthetic domain region spans residues 1–397 (MPKKSHIKKV…AFKKALRSLD (397 aa)). 12 residues coordinate ATP: arginine 127, arginine 167, glycine 173, glycine 174, glutamate 206, valine 208, glutamate 213, glycine 239, isoleucine 240, histidine 241, glutamine 282, and glutamate 294. The region spanning 131 to 323 (RDLMNAIGEP…IARVAAKIAI (193 aa)) is the ATP-grasp 1 domain. 3 residues coordinate Mg(2+): glutamine 282, glutamate 294, and asparagine 296. Residues glutamine 282, glutamate 294, and asparagine 296 each contribute to the Mn(2+) site. The segment at 398–530 (NDMQQHTNPS…YSTWEEGCEL (133 aa)) is oligomerization domain. The interval 531–920 (VRDSAKKVLI…YKACTAADNT (390 aa)) is carbamoyl phosphate synthetic domain. Positions 662-853 (SRLLTRLEIP…LAKIAAKVMV (192 aa)) constitute an ATP-grasp 2 domain. The ATP site is built by arginine 698, serine 737, leucine 739, glutamate 744, glycine 769, valine 770, histidine 771, serine 772, glutamine 812, and glutamate 824. Mg(2+)-binding residues include glutamine 812, glutamate 824, and asparagine 826. Positions 812, 824, and 826 each coordinate Mn(2+). The region spanning 919 to 1056 (NTLPTTGNVF…EPLGHYHGLM (138 aa)) is the MGS-like domain. The interval 921–1056 (LPTTGNVFIS…EPLGHYHGLM (136 aa)) is allosteric domain.

Belongs to the CarB family. In terms of assembly, composed of two chains; the small (or glutamine) chain promotes the hydrolysis of glutamine to ammonia, which is used by the large (or ammonia) chain to synthesize carbamoyl phosphate. Tetramer of heterodimers (alpha,beta)4. The cofactor is Mg(2+). Requires Mn(2+) as cofactor.

It carries out the reaction hydrogencarbonate + L-glutamine + 2 ATP + H2O = carbamoyl phosphate + L-glutamate + 2 ADP + phosphate + 2 H(+). The enzyme catalyses hydrogencarbonate + NH4(+) + 2 ATP = carbamoyl phosphate + 2 ADP + phosphate + 2 H(+). The protein operates within amino-acid biosynthesis; L-arginine biosynthesis; carbamoyl phosphate from bicarbonate: step 1/1. It participates in pyrimidine metabolism; UMP biosynthesis via de novo pathway; (S)-dihydroorotate from bicarbonate: step 1/3. Large subunit of the glutamine-dependent carbamoyl phosphate synthetase (CPSase). CPSase catalyzes the formation of carbamoyl phosphate from the ammonia moiety of glutamine, carbonate, and phosphate donated by ATP, constituting the first step of 2 biosynthetic pathways, one leading to arginine and/or urea and the other to pyrimidine nucleotides. The large subunit (synthetase) binds the substrates ammonia (free or transferred from glutamine from the small subunit), hydrogencarbonate and ATP and carries out an ATP-coupled ligase reaction, activating hydrogencarbonate by forming carboxy phosphate which reacts with ammonia to form carbamoyl phosphate. This chain is Carbamoyl phosphate synthase large chain, found in Methanoculleus marisnigri (strain ATCC 35101 / DSM 1498 / JR1).